The sequence spans 350 residues: MPGPAAGSRARVYAEVNSLRSREYWDYEAHVPSWGNQDDYQLVRKLGRGKYSEVFEAINITNNERVVVKILKPVKKKKIKREVKILENLRGGTNIINLIDTVKDPVSKTPALVFEYINNTDFKQLYQILTDFDIRFYMYELLKALDYCHSMGIMHRDVKPHNVMIDHQQKKLRLIDWGLAEFYHPAQEYNVRVASRYFKGPELLVDYQMYDYSLDMWSLGCMLASMIFRKEPFFHGQDNYDQLVRIAKVLGTDELYGYLKKYHIELDPHFNDILGQHSRKRWENFIHSENRHLVSPEVLDLLDKLLRYDHQQRLTAKEAMEHPYFYPVVKEQSQPSSENAVLSSGLTTAR.

One can recognise a Protein kinase domain in the interval 40–325 (YQLVRKLGRG…AKEAMEHPYF (286 aa)). Residues 46-54 (LGRGKYSEV) and K69 contribute to the ATP site. D157 functions as the Proton acceptor in the catalytic mechanism.

This sequence belongs to the protein kinase superfamily. Ser/Thr protein kinase family. CK2 subfamily. Tetramer composed of an alpha chain, an alpha' and two beta chains.

It carries out the reaction L-seryl-[protein] + ATP = O-phospho-L-seryl-[protein] + ADP + H(+). It catalyses the reaction L-threonyl-[protein] + ATP = O-phospho-L-threonyl-[protein] + ADP + H(+). Its function is as follows. Casein kinases are operationally defined by their preferential utilization of acidic proteins such as caseins as substrates. The alpha and alpha' chains contain the catalytic site. Participates in Wnt signaling. This chain is Casein kinase II subunit alpha', found in Gallus gallus (Chicken).